The following is a 448-amino-acid chain: Exodeoxyribonuclease 7 large subunit (448 aa).

The protein belongs to the XseA family. In terms of assembly, heterooligomer composed of large and small subunits.

The protein localises to the cytoplasm. It carries out the reaction Exonucleolytic cleavage in either 5'- to 3'- or 3'- to 5'-direction to yield nucleoside 5'-phosphates.. In terms of biological role, bidirectionally degrades single-stranded DNA into large acid-insoluble oligonucleotides, which are then degraded further into small acid-soluble oligonucleotides. The chain is Exodeoxyribonuclease 7 large subunit from Exiguobacterium sp. (strain ATCC BAA-1283 / AT1b).